The following is a 269-amino-acid chain: Proenkephalin-A (269 aa).

An N-terminal signal peptide occupies residues 1–24 (MAQFLRLCIWLLALGSCLLATVQA). 3 disulfide bridges follow: Cys26–Cys48, Cys30–Cys52, and Cys33–Cys65. The interval 165-191 (DNRAKDSHQQESTNNDEDSTSKRYGGF) is disordered. Propeptides lie at residues 198 to 209 (SPQLEDEAKELQ) and 219 to 229 (VGRPEWWMDYQ). A Phosphoserine modification is found at Ser253.

It belongs to the opioid neuropeptide precursor family. In terms of processing, proenkephalin-A is cleaved by CTSL to generate Met-enkephalin. Processed and degraded by ACE. Post-translationally, probably cleaved by ACE. In terms of processing, processed by ACE to generate Met-enkephalin in the nucleus accumbens of the brain. The N-terminal domain contains 6 conserved cysteines thought to be involved in disulfide bonding and/or processing. Expressed in brain, heart and testis.

It localises to the secreted. The protein resides in the cytoplasmic vesicle. Its subcellular location is the secretory vesicle. The protein localises to the chromaffin granule lumen. Its function is as follows. Neuropeptide that competes with and mimic the effects of opiate drugs. They play a role in a number of physiologic functions, including pain perception and responses to stress. In terms of biological role, met-enkephalin-Arg-Phe neuropeptide acts as a strong ligand of Mu-type opioid receptor OPRM1. Met-enkephalin-Arg-Phe-binding to OPRM1 in the nucleus accumbens of the brain increases activation of OPRM1, leading to long-term synaptic depression of glutamate release. Increases glutamate release in the striatum and decreases GABA concentration in the striatum. Functionally, increases glutamate release in the striatum. This Rattus norvegicus (Rat) protein is Proenkephalin-A (Penk).